A 176-amino-acid chain; its full sequence is RNA pyrophosphohydrolase (176 aa).

The Nudix hydrolase domain maps to 6–149; sequence GYRPNVGIVI…KRDVYRRVMK (144 aa). The short motif at 38–59 is the Nudix box element; the sequence is GGINPGESAEQAMYRELFEEVG.

It belongs to the Nudix hydrolase family. RppH subfamily. A divalent metal cation is required as a cofactor.

Accelerates the degradation of transcripts by removing pyrophosphate from the 5'-end of triphosphorylated RNA, leading to a more labile monophosphorylated state that can stimulate subsequent ribonuclease cleavage. This Escherichia fergusonii (strain ATCC 35469 / DSM 13698 / CCUG 18766 / IAM 14443 / JCM 21226 / LMG 7866 / NBRC 102419 / NCTC 12128 / CDC 0568-73) protein is RNA pyrophosphohydrolase.